The primary structure comprises 134 residues: Small ribosomal subunit protein uS8c (134 aa).

This sequence belongs to the universal ribosomal protein uS8 family. Part of the 30S ribosomal subunit.

It is found in the plastid. The protein localises to the chloroplast. Functionally, one of the primary rRNA binding proteins, it binds directly to 16S rRNA central domain where it helps coordinate assembly of the platform of the 30S subunit. The sequence is that of Small ribosomal subunit protein uS8c (rps8) from Lactuca sativa (Garden lettuce).